The following is a 263-amino-acid chain: Hydroxyacylglutathione hydrolase (263 aa).

Positions 55, 57, 59, 60, 117, 134, and 172 each coordinate Zn(2+).

Belongs to the metallo-beta-lactamase superfamily. Glyoxalase II family. As to quaternary structure, monomer. Requires Zn(2+) as cofactor.

The catalysed reaction is an S-(2-hydroxyacyl)glutathione + H2O = a 2-hydroxy carboxylate + glutathione + H(+). Its pathway is secondary metabolite metabolism; methylglyoxal degradation; (R)-lactate from methylglyoxal: step 2/2. In terms of biological role, thiolesterase that catalyzes the hydrolysis of S-D-lactoyl-glutathione to form glutathione and D-lactic acid. This is Hydroxyacylglutathione hydrolase from Shewanella baltica (strain OS195).